The chain runs to 303 residues: MMMMIQRRGGERQDSSAAAYNVVHKLPHGDSPYVRAKHVQLVEKDAEAAIELFWIAIKARDRVDSALKDMALLMKQQNRAEEAIDAIQSFRDLCSRQAQESLDNVLIDLYKKCGRIEEQVELLKQKLWMIYQGEAFNGKPTKTARSHGKKFQVTVEKETSRILGNLGWAYMQLMDYTAAEAVYRKAQLIEPDANKACNLCTCLIKQGKHDEARSILFRDVLMENKEGSGDPRLMARVQELLSELKPQEEEAAASVSVECEVGIDEIAVVEGLDEFVKEWRRPYRTRRLPIFEEILPLRDQLAC.

A coiled-coil region spans residues 62–89 (RVDSALKDMALLMKQQNRAEEAIDAIQS). 4 TPR repeats span residues 64-97 (DSALKDMALLMKQQNRAEEAIDAIQSFRDLCSRQ), 100-133 (ESLDNVLIDLYKKCGRIEEQVELLKQKLWMIYQG), 160-193 (SRILGNLGWAYMQLMDYTAAEAVYRKAQLIEPDA), and 195-226 (KACNLCTCLIKQGKHDEARSILFRDVLMENKE). Residues 232-253 (RLMARVQELLSELKPQEEEAAA) are a coiled coil.

This sequence belongs to the MS5 protein family.

Its subcellular location is the nucleus. Involved in the utilization of stored sulfate under sulfur-deficient conditions. The polypeptide is Protein SULFUR DEFICIENCY-INDUCED 2 (Arabidopsis thaliana (Mouse-ear cress)).